We begin with the raw amino-acid sequence, 293 residues long: Nucleotide-binding protein Csac_1160 (293 aa).

11-18 (GMSGAGKS) contributes to the ATP binding site. A GTP-binding site is contributed by 62–65 (DIRG).

The protein belongs to the RapZ-like family.

Displays ATPase and GTPase activities. The protein is Nucleotide-binding protein Csac_1160 of Caldicellulosiruptor saccharolyticus (strain ATCC 43494 / DSM 8903 / Tp8T 6331).